Here is a 401-residue protein sequence, read N- to C-terminus: NAD(P)H-quinone oxidoreductase subunit H, chloroplastic (401 aa).

It belongs to the complex I 49 kDa subunit family. In terms of assembly, NDH is composed of at least 16 different subunits, 5 of which are encoded in the nucleus.

The protein resides in the plastid. It localises to the chloroplast thylakoid membrane. The catalysed reaction is a plastoquinone + NADH + (n+1) H(+)(in) = a plastoquinol + NAD(+) + n H(+)(out). The enzyme catalyses a plastoquinone + NADPH + (n+1) H(+)(in) = a plastoquinol + NADP(+) + n H(+)(out). In terms of biological role, NDH shuttles electrons from NAD(P)H:plastoquinone, via FMN and iron-sulfur (Fe-S) centers, to quinones in the photosynthetic chain and possibly in a chloroplast respiratory chain. The immediate electron acceptor for the enzyme in this species is believed to be plastoquinone. Couples the redox reaction to proton translocation, and thus conserves the redox energy in a proton gradient. This Aethionema cordifolium (Lebanon stonecress) protein is NAD(P)H-quinone oxidoreductase subunit H, chloroplastic.